The primary structure comprises 67 residues: Large ribosomal subunit protein uL29 (67 aa).

The protein belongs to the universal ribosomal protein uL29 family.

The protein is Large ribosomal subunit protein uL29 of Desulforudis audaxviator (strain MP104C).